The following is a 1220-amino-acid chain: DNA-directed RNA polymerase subunit beta (1220 aa).

Belongs to the RNA polymerase beta chain family. The RNAP catalytic core consists of 2 alpha, 1 beta, 1 beta' and 1 omega subunit. When a sigma factor is associated with the core the holoenzyme is formed, which can initiate transcription.

The catalysed reaction is RNA(n) + a ribonucleoside 5'-triphosphate = RNA(n+1) + diphosphate. In terms of biological role, DNA-dependent RNA polymerase catalyzes the transcription of DNA into RNA using the four ribonucleoside triphosphates as substrates. The protein is DNA-directed RNA polymerase subunit beta of Mesomycoplasma hyopneumoniae (strain 232) (Mycoplasma hyopneumoniae).